A 504-amino-acid polypeptide reads, in one-letter code: ATP synthase subunit beta (504 aa).

181–188 serves as a coordination point for ATP; the sequence is GGAGVGKT.

The protein belongs to the ATPase alpha/beta chains family. As to quaternary structure, F-type ATPases have 2 components, CF(1) - the catalytic core - and CF(0) - the membrane proton channel. CF(1) has five subunits: alpha(3), beta(3), gamma(1), delta(1), epsilon(1). CF(0) has three main subunits: a(1), b(2) and c(9-12). The alpha and beta chains form an alternating ring which encloses part of the gamma chain. CF(1) is attached to CF(0) by a central stalk formed by the gamma and epsilon chains, while a peripheral stalk is formed by the delta and b chains.

Its subcellular location is the cell inner membrane. The enzyme catalyses ATP + H2O + 4 H(+)(in) = ADP + phosphate + 5 H(+)(out). In terms of biological role, produces ATP from ADP in the presence of a proton gradient across the membrane. The catalytic sites are hosted primarily by the beta subunits. The chain is ATP synthase subunit beta from Ehrlichia ruminantium (strain Gardel).